The primary structure comprises 286 residues: 2-dehydro-3-deoxyphosphooctonate aldolase (286 aa).

Belongs to the KdsA family.

The protein resides in the cytoplasm. It carries out the reaction D-arabinose 5-phosphate + phosphoenolpyruvate + H2O = 3-deoxy-alpha-D-manno-2-octulosonate-8-phosphate + phosphate. The protein operates within carbohydrate biosynthesis; 3-deoxy-D-manno-octulosonate biosynthesis; 3-deoxy-D-manno-octulosonate from D-ribulose 5-phosphate: step 2/3. It functions in the pathway bacterial outer membrane biogenesis; lipopolysaccharide biosynthesis. This Bradyrhizobium sp. (strain BTAi1 / ATCC BAA-1182) protein is 2-dehydro-3-deoxyphosphooctonate aldolase.